Consider the following 422-residue polypeptide: uncharacterized protein (422 aa).

An RRM domain is found at 5-83 (CVVYVGNIPY…RRLRVDFPTA (79 aa)). Positions 337–358 (RSSSIPSSGSIRSPSLTTTSAQ) are disordered.

It is found in the nucleus. This is an uncharacterized protein from Schizosaccharomyces pombe (strain 972 / ATCC 24843) (Fission yeast).